We begin with the raw amino-acid sequence, 484 residues long: Coronin-1B (484 aa).

The residue at position 2 (S2) is a Phosphoserine. 5 WD repeats span residues G80–P120, G130–R170, L174–E213, A217–A260, and D265–H305. The disordered stretch occupies residues L404 to G446. The segment covering N410–A430 has biased composition (polar residues). The stretch at E444–G482 forms a coiled coil.

The protein belongs to the WD repeat coronin family. In terms of assembly, forms homooligomers, but does not form complexes with the other coronins. Interacts with Arp2/3 complex components, including ACTR2, ARPC1B and ARPC2. Binds actin. In terms of processing, phosphorylation on Ser-2 regulates the interaction with the Arp2/3 complex and cell motility in fibroblasts. Phosphorylation does not seem to affect subcellular location. In terms of tissue distribution, ubiquitous.

The protein localises to the cytoplasm. It localises to the cytoskeleton. The protein resides in the stress fiber. In terms of biological role, regulates leading edge dynamics and cell motility in fibroblasts. May be involved in cytokinesis and signal transduction. This chain is Coronin-1B (Coro1b), found in Mus musculus (Mouse).